We begin with the raw amino-acid sequence, 197 residues long: Glycerol-3-phosphate acyltransferase (197 aa).

5 helical membrane-spanning segments follow: residues 7–27, 55–75, 78–98, 116–136, and 157–177; these read TLLPLVVGYVLGSVPFGLILT, GLAAATLLLDLGKGLAAVLIV, VWPGAEALAALAAVLGHCFPV, LALAWPIGLVYAVTWLGVLFL, and VLGYAPYVPVLALLALLVLYL.

The protein belongs to the PlsY family. Probably interacts with PlsX.

It localises to the cell inner membrane. It catalyses the reaction an acyl phosphate + sn-glycerol 3-phosphate = a 1-acyl-sn-glycero-3-phosphate + phosphate. It participates in lipid metabolism; phospholipid metabolism. Functionally, catalyzes the transfer of an acyl group from acyl-phosphate (acyl-PO(4)) to glycerol-3-phosphate (G3P) to form lysophosphatidic acid (LPA). This enzyme utilizes acyl-phosphate as fatty acyl donor, but not acyl-CoA or acyl-ACP. The protein is Glycerol-3-phosphate acyltransferase of Novosphingobium aromaticivorans (strain ATCC 700278 / DSM 12444 / CCUG 56034 / CIP 105152 / NBRC 16084 / F199).